A 225-amino-acid polypeptide reads, in one-letter code: Glutathione S-transferase U2 (225 aa).

A GST N-terminal domain is found at E6–P85. Glutathione-binding positions include S16 to P17, K42 to K43, K56 to V57, and E69 to S70. One can recognise a GST C-terminal domain in the interval D90–I217. T151 is subject to Phosphothreonine.

The protein belongs to the GST superfamily. Tau family.

The protein resides in the cytoplasm. The protein localises to the cytosol. It catalyses the reaction RX + glutathione = an S-substituted glutathione + a halide anion + H(+). In terms of biological role, may be involved in the conjugation of reduced glutathione to a wide number of exogenous and endogenous hydrophobic electrophiles and have a detoxification role against certain herbicides. This is Glutathione S-transferase U2 (GSTU2) from Arabidopsis thaliana (Mouse-ear cress).